The primary structure comprises 486 residues: Cysteine--tRNA ligase (486 aa).

Cysteine 30 serves as a coordination point for Zn(2+). The 'HIGH' region signature appears at 32–42 (PTVYDRAHLGN). Residues cysteine 221, histidine 246, and glutamate 250 each coordinate Zn(2+). Positions 279 to 283 (KMSKS) match the 'KMSKS' region motif. Lysine 282 is an ATP binding site.

Belongs to the class-I aminoacyl-tRNA synthetase family. Monomer. The cofactor is Zn(2+).

Its subcellular location is the cytoplasm. The enzyme catalyses tRNA(Cys) + L-cysteine + ATP = L-cysteinyl-tRNA(Cys) + AMP + diphosphate. The sequence is that of Cysteine--tRNA ligase from Cereibacter sphaeroides (strain ATCC 17029 / ATH 2.4.9) (Rhodobacter sphaeroides).